The sequence spans 389 residues: SH3 and F-BAR domain-containing protein DDB_G0274695 (389 aa).

Positions 3-258 (EQFKDNFWGP…VITQIDKLED (256 aa)) constitute an F-BAR domain. Positions 119 to 192 (KLNKERKDME…QDYRDSVNKL (74 aa)) form a coiled coil. Low complexity predominate over residues 300-328 (LTSSVSSNSLTSSYNSATTTPTPAPRSTP). Residues 300–329 (LTSSVSSNSLTSSYNSATTTPTPAPRSTPI) are disordered. In terms of domain architecture, SH3 spans 332–389 (SKKKQAKALYDYVGSDATELDFFAGDIITILDEDESGWFRGELGDRIGLYPSNYCEPI).

This chain is SH3 and F-BAR domain-containing protein DDB_G0274695, found in Dictyostelium discoideum (Social amoeba).